The chain runs to 1202 residues: Probable DNA polymerase (1202 aa).

It belongs to the DNA polymerase type-B family.

It is found in the mitochondrion. It catalyses the reaction DNA(n) + a 2'-deoxyribonucleoside 5'-triphosphate = DNA(n+1) + diphosphate. This is Probable DNA polymerase from Ascobolus immersus.